Here is a 300-residue protein sequence, read N- to C-terminus: Ankyrin repeat domain-containing protein 54 (300 aa).

The disordered stretch occupies residues 1–27 (MAAAAGDADDEPRSGHSSSEGECAVAP). An N-acetylalanine modification is found at Ala-2. Phosphoserine is present on residues Ser-58 and Ser-63. A Nuclear localization signal (NLS) motif is present at residues 99–117 (RRLGPTGKEVHALKRLRDS). ANK repeat units follow at residues 109 to 138 (HALKRLRDSANANDVETVQQLLEDGADPCA), 142 to 171 (KGRTALHFASCNGNDQIVQLLLDHGADPNQ), 175 to 204 (LGNTPLHLAACTNHVPVITTLLRGGARVDA), and 208 to 244 (AGRTPLHLAKSKLNILQEGHAQCLEAVRLEVKQIIHM). Positions 141–241 (DKGRTALHFA…EAVRLEVKQI (101 aa)) are LYN-binding. The Nuclear export signal (NES) signature appears at 283–293 (LLASFTSLSLQ).

Interacts (via ankyrin repeat region) with LYN (via SH3-domain) in an activation-independent status of LYN. Forms a multiprotein complex with LYN and HCLS1. Interacts with TSN2, VAV1, DBNL and LASP1.

The protein resides in the nucleus. Its subcellular location is the cytoplasm. It localises to the midbody. Its function is as follows. Plays an important role in regulating intracellular signaling events associated with erythroid terminal differentiation. The sequence is that of Ankyrin repeat domain-containing protein 54 (ANKRD54) from Homo sapiens (Human).